Here is a 93-residue protein sequence, read N- to C-terminus: MSRSIKKGPFIDDHLMKKTLKAKEGKDNRPIKTWSRRSTILPEMIGFTYNVHNGRVFIPVYITENHVGYKLGEFAPTRTFKGHKGSVQKKIGK.

This sequence belongs to the universal ribosomal protein uS19 family.

Functionally, protein S19 forms a complex with S13 that binds strongly to the 16S ribosomal RNA. This is Small ribosomal subunit protein uS19 (rpsS) from Helicobacter pylori (strain ATCC 700392 / 26695) (Campylobacter pylori).